Here is a 505-residue protein sequence, read N- to C-terminus: Sucrose porin (505 aa).

Positions 1-22 are cleaved as a signal peptide; the sequence is MYRKSTLAMLIALLTSAASAHA. The segment at 44–87 is disordered; it reads ENRAQTAENRAGAAEKKVQQLTAQQQKNQNSTQEVAQRTARLEK. Residues 62–72 are compositionally biased toward low complexity; that stretch reads QQLTAQQQKNQ.

The protein belongs to the porin LamB (TC 1.B.3) family. In terms of assembly, homotrimer.

The protein resides in the cell outer membrane. Functionally, porin for sucrose uptake. This is Sucrose porin (scrY) from Salmonella typhimurium.